A 393-amino-acid chain; its full sequence is Major outer membrane porin, serovar D (393 aa).

A signal peptide spans 1 to 22; that stretch reads MKKLLKSVLVFAALSSASSLQA.

The protein belongs to the chlamydial porin (CP) (TC 1.B.2) family. In terms of assembly, part of a disulfide cross-linked outer membrane complex (COMC) composed of the major outer membrane porin (MOMP), the small cysteine-rich protein (OmcA) and the large cysteine-rich periplasmic protein (OmcB).

It is found in the cell outer membrane. Functionally, in elementary bodies (EBs, the infectious stage, which is able to survive outside the host cell) provides the structural integrity of the outer envelope through disulfide cross-links with the small cysteine-rich protein and the large cysteine-rich periplasmic protein. It has been described in publications as the Sarkosyl-insoluble COMC (Chlamydia outer membrane complex), and serves as the functional equivalent of peptidoglycan. In terms of biological role, permits diffusion of specific solutes through the outer membrane. In Chlamydia trachomatis serovar D (strain ATCC VR-885 / DSM 19411 / UW-3/Cx), this protein is Major outer membrane porin, serovar D (ompA).